The primary structure comprises 177 residues: Actinorhodin polyketide dimerase (177 aa).

To S.pristinaespiralis SnaC.

Its pathway is antibiotic biosynthesis; actinorhodin biosynthesis. This Streptomyces coelicolor (strain ATCC BAA-471 / A3(2) / M145) protein is Actinorhodin polyketide dimerase (actVB).